A 395-amino-acid polypeptide reads, in one-letter code: Protein maternal effect lethal 26 (395 aa).

Residues 41–162 (KVQHTWTVKN…RDMIIVNVEI (122 aa)) enclose the MATH domain. In terms of domain architecture, BTB spans 201-269 (CDFAINVNGK…IYCGRCNKDI (69 aa)).

Interacts (via BTB domain) with cul-3. Seems to be a component of a E3 ubiquitin-protein ligase complex containing cul-3. Interacts (probably via MATH domain) with mei-1, which targets mei-1 for ubiquitin-mediated proteolysis. Interacts (probably via MATH domain) with ppfr-1, the regulatory subunit of the PP4 complex; targets ppfr-1 for ubiquitin-mediated proteolysis. May interact (via MATH domain) with unc-89 (via Ig-like C2-type domain 2/3 and, Ig-like C2-type domain 50 and fibronectin type-III domain 2). As to expression, expressed in body wall muscles.

It is found in the cytoplasm. Its subcellular location is the myofibril. It localises to the sarcomere. The protein resides in the m line. The protein localises to the i band. It participates in protein modification; protein ubiquitination. In terms of biological role, probable substrate-specific adapter of an E3 ubiquitin-protein ligase complex which mediates the ubiquitination and subsequent proteasomal degradation of target proteins. Controls degradation of microtubule severing protein mei-1 after meiosis. Controls degradation of ppfr-1, the regulatory subunit of PP4 complex, after meiosis. In body wall muscles, involved in the organization of myosin thick filaments, likely by regulating the degradation of mei-1 downstream of unc-89. May also activate the TORC1 pathway. This Caenorhabditis elegans protein is Protein maternal effect lethal 26 (mel-26).